The primary structure comprises 177 residues: ATP-dependent protease subunit HslV (177 aa).

Residue threonine 6 is part of the active site. Na(+) is bound by residues alanine 162, cysteine 165, and threonine 168.

The protein belongs to the peptidase T1B family. HslV subfamily. A double ring-shaped homohexamer of HslV is capped on each side by a ring-shaped HslU homohexamer. The assembly of the HslU/HslV complex is dependent on binding of ATP.

It localises to the cytoplasm. The catalysed reaction is ATP-dependent cleavage of peptide bonds with broad specificity.. With respect to regulation, allosterically activated by HslU binding. Functionally, protease subunit of a proteasome-like degradation complex believed to be a general protein degrading machinery. This Lawsonia intracellularis (strain PHE/MN1-00) protein is ATP-dependent protease subunit HslV.